A 232-amino-acid polypeptide reads, in one-letter code: Phosphoribosylformylglycinamidine synthase subunit PurQ (232 aa).

Positions 2-232 (RIGVITFPGS…SVVRSTLVEA (231 aa)) constitute a Glutamine amidotransferase type-1 domain. The Nucleophile role is filled by cysteine 85. Residues histidine 194 and glutamate 196 contribute to the active site.

In terms of assembly, part of the FGAM synthase complex composed of 1 PurL, 1 PurQ and 2 PurS subunits.

The protein localises to the cytoplasm. The enzyme catalyses N(2)-formyl-N(1)-(5-phospho-beta-D-ribosyl)glycinamide + L-glutamine + ATP + H2O = 2-formamido-N(1)-(5-O-phospho-beta-D-ribosyl)acetamidine + L-glutamate + ADP + phosphate + H(+). The catalysed reaction is L-glutamine + H2O = L-glutamate + NH4(+). It functions in the pathway purine metabolism; IMP biosynthesis via de novo pathway; 5-amino-1-(5-phospho-D-ribosyl)imidazole from N(2)-formyl-N(1)-(5-phospho-D-ribosyl)glycinamide: step 1/2. Part of the phosphoribosylformylglycinamidine synthase complex involved in the purines biosynthetic pathway. Catalyzes the ATP-dependent conversion of formylglycinamide ribonucleotide (FGAR) and glutamine to yield formylglycinamidine ribonucleotide (FGAM) and glutamate. The FGAM synthase complex is composed of three subunits. PurQ produces an ammonia molecule by converting glutamine to glutamate. PurL transfers the ammonia molecule to FGAR to form FGAM in an ATP-dependent manner. PurS interacts with PurQ and PurL and is thought to assist in the transfer of the ammonia molecule from PurQ to PurL. The sequence is that of Phosphoribosylformylglycinamidine synthase subunit PurQ from Leifsonia xyli subsp. xyli (strain CTCB07).